The chain runs to 189 residues: MSIKSDRWIKRMAEQHAMIAPFEPGQIKHDAAGQRIVSFGTSSYGYDVRCSREFKIFTNINSTIVDPKRFDPGSFVDVESDVCIIPPNSFALARTVEYFRIPRDTLVVCLGKSTYARCGIIVNVTPLEPEWEGHVTLEFSNTTPLPARIYANEGVAQMLFFQSDEVCETSYKDRGGKYQGQTGVTLPRT.

Residues 112-117 (KSTYAR), 136-138 (TLE), Q157, Y171, and Q181 each bind dCTP. E138 serves as the catalytic Proton donor/acceptor.

The protein belongs to the dCTP deaminase family. Homotrimer.

It carries out the reaction dCTP + H2O + H(+) = dUTP + NH4(+). Its pathway is pyrimidine metabolism; dUMP biosynthesis; dUMP from dCTP (dUTP route): step 1/2. Its function is as follows. Catalyzes the deamination of dCTP to dUTP. In Xanthomonas oryzae pv. oryzae (strain MAFF 311018), this protein is dCTP deaminase.